A 241-amino-acid polypeptide reads, in one-letter code: Phosducin-like protein 2 (241 aa).

The Phosducin domain occupies 34–202 (VLRLQKEAMV…EWKLAEVGAI (169 aa)). A thioredoxin fold region spans residues 89 to 241 (FGELREISGN…DSSNSDNDTK (153 aa)).

Belongs to the phosducin family. Interacts with the CCT chaperonin complex and actin. Testis-specific.

It localises to the endoplasmic reticulum. In terms of biological role, essential for male fertility, spermiogenesis and acrosome formation. The sequence is that of Phosducin-like protein 2 (PDCL2) from Homo sapiens (Human).